The chain runs to 146 residues: Snaclec mamushigin subunit beta (146 aa).

An N-terminal signal peptide occupies residues 1 to 23 (MGRFIFLSFGLLVVFVSLSGTGA). 3 disulfides stabilise this stretch: Cys-25–Cys-36, Cys-53–Cys-142, and Cys-119–Cys-134. The 112-residue stretch at 32-143 (YEGHCYRVFQ…CSRTYNVVCK (112 aa)) folds into the C-type lectin domain.

In terms of assembly, heterodimer of subunits alpha and beta; disulfide-linked. As to expression, expressed by the venom gland.

Its subcellular location is the secreted. Functionally, binds to platelet GPIbalpha (GP1BA) and enhances platelet aggregation at low-shear stress. At high-shear stress, blocks platelet aggregation in a dose-dependent manner. The polypeptide is Snaclec mamushigin subunit beta (Gloydius blomhoffii (Mamushi)).